The primary structure comprises 115 residues: Hydrogenase maturation factor HypA (115 aa).

Residue His-2 coordinates Ni(2+). Cys-73, Cys-76, Cys-89, and Cys-92 together coordinate Zn(2+).

The protein belongs to the HypA/HybF family.

Its function is as follows. Involved in the maturation of [NiFe] hydrogenases. Required for nickel insertion into the metal center of the hydrogenase. This is Hydrogenase maturation factor HypA from Polaromonas naphthalenivorans (strain CJ2).